The sequence spans 625 residues: Protein SUPPRESSOR OF GENE SILENCING 3 (625 aa).

3 disordered regions span residues 1–20 (MSSR…GYRP), 30–148 (AGTR…SAQH), and 161–195 (VDNA…QKSH). A compositionally biased stretch (polar residues) spans 54–70 (KPGNTSGKTWVSQNSNP). A compositionally biased stretch (low complexity) spans 80–94 (GRGSNVSGRGNNVSG). Over residues 161 to 188 (VDNASEEENDSDALDDSDDDLASDDYDS) the composition is skewed to acidic residues. 2 coiled-coil regions span residues 452–533 (KNKL…QQQE) and 564–615 (IEFQ…EQLM).

The protein belongs to the SGS3 family. In terms of assembly, interacts with begomoviruses protein V2. Interacts with SGIP1 in cytoplasmic granules.

It is found in the cytoplasm. It localises to the perinuclear region. The protein resides in the cytoplasmic granule. Required for post-transcriptional gene silencing and natural virus resistance. May bind nucleic acids and is essential for the biogenesis of trans-acting siRNAs but is not required for silencing induced by IR-PTGS. Involved in the juvenile-to-adult transition regulation. In case of begomoviruses infection, it is targeted by the viral protein V2 leading to suppression of post-transcriptional gene silencing. Involved in the mechanisms necessary for quick response to heat and subsequent heritable transgenerational memory of heat acclimation (global warming) such as early flowering and attenuated immunity; this process includes epigenetic regulation as well as post-transcriptional gene silencing (PTGS). In response to heat, HSFA2 is activated and promotes the expression of REF6 which in turn derepresses HSFA2, thus establishing an inheritable feedback loop able to trigger SGIP1 and subsequent SGIP1-mediated SGS3 degradation; this prevents the biosynthesis of trans-acting siRNA (tasiRNA) and leads to the release of HTT5, which drives early flowering but attenuates immunity. This is Protein SUPPRESSOR OF GENE SILENCING 3 from Arabidopsis thaliana (Mouse-ear cress).